A 217-amino-acid polypeptide reads, in one-letter code: Adenylate kinase (217 aa).

Residue 10 to 15 (GAGKGT) coordinates ATP. The interval 30 to 59 (STGDMFRAAIKEGTELGLQAKSFMDQGALV) is NMP. AMP-binding positions include Thr31, Arg36, 57-59 (ALV), 85-88 (GFPR), and Gln92. The LID stretch occupies residues 126–163 (GRRICKTCGASYHLIFNPPAEEGKCDKDGGELYTRADD). Arg127 contacts ATP. Zn(2+) contacts are provided by Cys130 and Cys133. 136–137 (SY) is an ATP binding site. The Zn(2+) site is built by Cys150 and Asp153. The AMP site is built by Arg160 and Arg171. Gln199 serves as a coordination point for ATP.

Belongs to the adenylate kinase family. In terms of assembly, monomer.

It is found in the cytoplasm. It carries out the reaction AMP + ATP = 2 ADP. It functions in the pathway purine metabolism; AMP biosynthesis via salvage pathway; AMP from ADP: step 1/1. In terms of biological role, catalyzes the reversible transfer of the terminal phosphate group between ATP and AMP. Plays an important role in cellular energy homeostasis and in adenine nucleotide metabolism. The chain is Adenylate kinase from Lysinibacillus sphaericus (strain C3-41).